The sequence spans 227 residues: Cytidylate kinase (227 aa).

12 to 20 contributes to the ATP binding site; sequence GPSGAGKGT.

The protein belongs to the cytidylate kinase family. Type 1 subfamily.

The protein resides in the cytoplasm. It carries out the reaction CMP + ATP = CDP + ADP. It catalyses the reaction dCMP + ATP = dCDP + ADP. In Xanthomonas euvesicatoria pv. vesicatoria (strain 85-10) (Xanthomonas campestris pv. vesicatoria), this protein is Cytidylate kinase.